A 228-amino-acid polypeptide reads, in one-letter code: ATP-dependent dethiobiotin synthetase BioD (228 aa).

12-17 (EIGKTT) contacts ATP. Residue T16 participates in Mg(2+) binding. The active site involves K37. Residue S41 coordinates substrate. Residues D54, 116–119 (EGAG), and 205–207 (PRL) each bind ATP. Mg(2+) contacts are provided by D54 and E116.

It belongs to the dethiobiotin synthetase family. In terms of assembly, homodimer. It depends on Mg(2+) as a cofactor.

It localises to the cytoplasm. It catalyses the reaction (7R,8S)-7,8-diammoniononanoate + CO2 + ATP = (4R,5S)-dethiobiotin + ADP + phosphate + 3 H(+). It functions in the pathway cofactor biosynthesis; biotin biosynthesis; biotin from 7,8-diaminononanoate: step 1/2. In terms of biological role, catalyzes a mechanistically unusual reaction, the ATP-dependent insertion of CO2 between the N7 and N8 nitrogen atoms of 7,8-diaminopelargonic acid (DAPA, also called 7,8-diammoniononanoate) to form a ureido ring. The protein is ATP-dependent dethiobiotin synthetase BioD of Pseudomonas aeruginosa (strain ATCC 15692 / DSM 22644 / CIP 104116 / JCM 14847 / LMG 12228 / 1C / PRS 101 / PAO1).